Reading from the N-terminus, the 224-residue chain is Pyridoxine/pyridoxamine 5'-phosphate oxidase (224 aa).

FMN is bound by residues 69–74 (RHVLLK), 83–84 (FT), arginine 89, lysine 90, and glutamine 112. Residue lysine 74 participates in substrate binding. Tyrosine 130, arginine 134, and serine 138 together coordinate substrate. Residues 148-149 (QS) and tryptophan 194 each bind FMN. 200–202 (RMH) lines the substrate pocket. Arginine 204 is a binding site for FMN.

It belongs to the pyridoxamine 5'-phosphate oxidase family. Homodimer. FMN serves as cofactor.

The enzyme catalyses pyridoxamine 5'-phosphate + O2 + H2O = pyridoxal 5'-phosphate + H2O2 + NH4(+). The catalysed reaction is pyridoxine 5'-phosphate + O2 = pyridoxal 5'-phosphate + H2O2. It participates in cofactor metabolism; pyridoxal 5'-phosphate salvage; pyridoxal 5'-phosphate from pyridoxamine 5'-phosphate: step 1/1. It functions in the pathway cofactor metabolism; pyridoxal 5'-phosphate salvage; pyridoxal 5'-phosphate from pyridoxine 5'-phosphate: step 1/1. Functionally, catalyzes the oxidation of either pyridoxine 5'-phosphate (PNP) or pyridoxamine 5'-phosphate (PMP) into pyridoxal 5'-phosphate (PLP). In Acidothermus cellulolyticus (strain ATCC 43068 / DSM 8971 / 11B), this protein is Pyridoxine/pyridoxamine 5'-phosphate oxidase.